The chain runs to 293 residues: Epimerase family protein SDR39U1 (293 aa).

NADP(+) contacts are provided by residues 31-32 (SR), 58-59 (LA), glutamate 77, arginine 82, and valine 160.

This sequence belongs to the NAD(P)-dependent epimerase/dehydratase family. SDR39U1 subfamily. As to expression, expressed in adrenal gland.

Putative NADP-dependent oxidoreductase. The sequence is that of Epimerase family protein SDR39U1 (SDR39U1) from Homo sapiens (Human).